Consider the following 191-residue polypeptide: MIWDTDSIIQAYAQGYFLMSDEEGTLGWYTSSQRTLIPLDDRFRYPKSLQRVLNQERFTVAINRDFPAVCWGCANRETTWISHELIEIYLQLNQAGWAFSFETWQGNQLAGGILGIAIRGAFIGESMFYNIPDGSKVAMVKLVEHLRARGFVLFDAQLQNPHLARFGSYGISDREYKLLLRKALSSKCHLI.

It belongs to the L/F-transferase family.

The protein resides in the cytoplasm. The enzyme catalyses N-terminal L-lysyl-[protein] + L-leucyl-tRNA(Leu) = N-terminal L-leucyl-L-lysyl-[protein] + tRNA(Leu) + H(+). The catalysed reaction is N-terminal L-arginyl-[protein] + L-leucyl-tRNA(Leu) = N-terminal L-leucyl-L-arginyl-[protein] + tRNA(Leu) + H(+). It catalyses the reaction L-phenylalanyl-tRNA(Phe) + an N-terminal L-alpha-aminoacyl-[protein] = an N-terminal L-phenylalanyl-L-alpha-aminoacyl-[protein] + tRNA(Phe). Functions in the N-end rule pathway of protein degradation where it conjugates Leu, Phe and, less efficiently, Met from aminoacyl-tRNAs to the N-termini of proteins containing an N-terminal arginine or lysine. This chain is Leucyl/phenylalanyl-tRNA--protein transferase, found in Gloeothece citriformis (strain PCC 7424) (Cyanothece sp. (strain PCC 7424)).